Consider the following 416-residue polypeptide: Imidazolonepropionase (416 aa).

The Fe(3+) site is built by H82 and H84. Positions 82 and 84 each coordinate Zn(2+). R91, Y154, and H187 together coordinate 4-imidazolone-5-propanoate. Y154 is a binding site for N-formimidoyl-L-glutamate. H252 is a binding site for Fe(3+). H252 provides a ligand contact to Zn(2+). 4-imidazolone-5-propanoate is bound at residue E255. D326 contributes to the Fe(3+) binding site. Position 326 (D326) interacts with Zn(2+). Positions 328 and 330 each coordinate N-formimidoyl-L-glutamate. S331 is a binding site for 4-imidazolone-5-propanoate.

This sequence belongs to the metallo-dependent hydrolases superfamily. HutI family. It depends on Zn(2+) as a cofactor. Fe(3+) serves as cofactor.

It is found in the cytoplasm. It catalyses the reaction 4-imidazolone-5-propanoate + H2O = N-formimidoyl-L-glutamate. It participates in amino-acid degradation; L-histidine degradation into L-glutamate; N-formimidoyl-L-glutamate from L-histidine: step 3/3. In terms of biological role, catalyzes the hydrolytic cleavage of the carbon-nitrogen bond in imidazolone-5-propanoate to yield N-formimidoyl-L-glutamate. It is the third step in the universal histidine degradation pathway. The protein is Imidazolonepropionase of Parabacteroides distasonis (strain ATCC 8503 / DSM 20701 / CIP 104284 / JCM 5825 / NCTC 11152).